The primary structure comprises 449 residues: Xylose isomerase (449 aa).

Active-site residues include H103 and D106. Mg(2+) is bound by residues E234, E270, H273, D298, D309, D311, and D342.

The protein belongs to the xylose isomerase family. As to quaternary structure, homotetramer. The cofactor is Mg(2+).

The protein localises to the cytoplasm. The catalysed reaction is alpha-D-xylose = alpha-D-xylulofuranose. This chain is Xylose isomerase, found in Levilactobacillus brevis (strain ATCC 367 / BCRC 12310 / CIP 105137 / JCM 1170 / LMG 11437 / NCIMB 947 / NCTC 947) (Lactobacillus brevis).